A 207-amino-acid polypeptide reads, in one-letter code: Acyl-homoserine-lactone synthase (207 aa).

It belongs to the autoinducer synthase family.

The enzyme catalyses a fatty acyl-[ACP] + S-adenosyl-L-methionine = an N-acyl-L-homoserine lactone + S-methyl-5'-thioadenosine + holo-[ACP] + H(+). Required for the synthesis of N-butanoyl-L-homoserine lactone (BHL), an autoinducer molecule which binds to AhyR. This Aeromonas hydrophila protein is Acyl-homoserine-lactone synthase (ahyI).